Consider the following 2190-residue polypeptide: Highly-reducing polyketide synthase 1 (2190 aa).

The 426-residue stretch at 6–431 (LTPVAIVGYA…GANAHVVLGA (426 aa)) folds into the Ketosynthase family 3 (KS3) domain. Catalysis depends on for beta-ketoacyl synthase activity residues Cys179, His315, and His355. The region spanning 541 to 857 (FVFTGQGAQW…VSVLARGQNA (317 aa)) is the Malonyl-CoA:ACP transacylase (MAT) domain. The segment at 925-1061 (NDLLGSLADW…GLVGVRNSPA (137 aa)) is N-terminal hotdog fold. A PKS/mFAS DH domain is found at 925–1246 (NDLLGSLADW…MTPLRESSGS (322 aa)). His957 functions as the Proton acceptor; for dehydratase activity in the catalytic mechanism. A C-terminal hotdog fold region spans residues 1089–1246 (TETVDVQAMY…MTPLRESSGS (158 aa)). The active-site Proton donor; for dehydratase activity is the Asp1154. The 311-residue stretch at 1494-1804 (GSLDSFYFVD…SGKSMGKLVI (311 aa)) folds into the Enoyl reductase (ER) domain. The region spanning 1828–2005 (ASYLIVGGTG…GTSLDLTAVS (178 aa)) is the Ketoreductase (KR) domain. Residues 2107 to 2184 (KALEVLYGAL…ELAKLISKKS (78 aa)) form the Carrier domain. O-(pantetheine 4'-phosphoryl)serine is present on Ser2144.

The cofactor is pantetheine 4'-phosphate.

Its function is as follows. Highly-reducing polyketide synthase; part of the gene cluster that mediates the biosynthesis of liamocins, glycolipids (also called heavy oils) composed of a single mannitol or arabitol headgroup linked to either three, four or even six 3,5-dihydroxydecanoic ester tail-groups. Within the pathway, PKS1 is responsible for biosynthesis of 3,5-dihydroxydecanoic acid from acetyl-CoA and malonyl-CoA. A phosphopantetheine transferase (PPTase) activates the HR-PKS. The esterase EST1 then catalyzes ester bond formation between 3,5-dihydroxydecanoic acid and mannitol (provided by the mannitol-1-phosphate 5-dehydrogenase and the NADP-dependent mannitol dehydrogenase) or arabinol (provided by the L-arabinitol 4-dehydrogenase). The protein is Highly-reducing polyketide synthase 1 of Aureobasidium melanogenum (Aureobasidium pullulans var. melanogenum).